A 356-amino-acid polypeptide reads, in one-letter code: Probable butyrate kinase (356 aa).

It belongs to the acetokinase family.

It localises to the cytoplasm. It carries out the reaction butanoate + ATP = butanoyl phosphate + ADP. In Clostridium perfringens (strain SM101 / Type A), this protein is Probable butyrate kinase.